A 214-amino-acid polypeptide reads, in one-letter code: Large ribosomal subunit protein uL3 (214 aa).

The interval 131–155 (GAQRTSHGNSRSHRVPGSIGMAQDP) is disordered. Gln153 is modified (N5-methylglutamine).

Belongs to the universal ribosomal protein uL3 family. Part of the 50S ribosomal subunit. Forms a cluster with proteins L14 and L19. Methylated by PrmB.

Its function is as follows. One of the primary rRNA binding proteins, it binds directly near the 3'-end of the 23S rRNA, where it nucleates assembly of the 50S subunit. The sequence is that of Large ribosomal subunit protein uL3 from Neisseria meningitidis serogroup C (strain 053442).